A 279-amino-acid polypeptide reads, in one-letter code: Urease accessory protein UreD (279 aa).

It belongs to the UreD family. In terms of assembly, ureD, UreF and UreG form a complex that acts as a GTP-hydrolysis-dependent molecular chaperone, activating the urease apoprotein by helping to assemble the nickel containing metallocenter of UreC. The UreE protein probably delivers the nickel.

Its subcellular location is the cytoplasm. Its function is as follows. Required for maturation of urease via the functional incorporation of the urease nickel metallocenter. The protein is Urease accessory protein UreD of Brucella suis (strain ATCC 23445 / NCTC 10510).